The primary structure comprises 305 residues: J domain-containing protein 1 (305 aa).

The 73-residue stretch at Thr91–Ala163 folds into the J domain. A helical membrane pass occupies residues Trp212–Ile232.

This sequence belongs to the DnaJ family.

It localises to the mitochondrion membrane. Probable chaperone. This chain is J domain-containing protein 1 (JID1), found in Eremothecium gossypii (strain ATCC 10895 / CBS 109.51 / FGSC 9923 / NRRL Y-1056) (Yeast).